A 389-amino-acid polypeptide reads, in one-letter code: Gustatory receptor 68a (389 aa).

The Cytoplasmic segment spans residues 1-42; sequence MKIYQDIYPISKPSQIFAILPFYSGDVDDGFRFGGLGRWYGR. A helical transmembrane segment spans residues 43-63; the sequence is LVALIILIGSLTLGEDVLFAS. The Extracellular segment spans residues 64–82; that stretch reads KEYRLVASAQGDTEEINRT. A glycan (N-linked (GlcNAc...) asparagine) is linked at N80. The chain crosses the membrane as a helical span at residues 83–103; that stretch reads IETLLCIISYTMVVLSSVQNA. The Cytoplasmic portion of the chain corresponds to 104 to 133; that stretch reads SRHFRTLHDIAKIDEYLLANGFRETYSCRN. A helical membrane pass occupies residues 134-154; that stretch reads LTILVTSAAGGVLAVAFYYIH. The Extracellular portion of the chain corresponds to 155–164; sequence YRSGIGAKRQ. The chain crosses the membrane as a helical span at residues 165 to 185; it reads IILLLIYFLQLLYSTLLALYL. At 186-236 the chain is on the cytoplasmic side; it reads RTLMMNLAQRIGFLNQKLDTFNLQDCGHMENWRELSNLIEVLCKFRYITEN. Residues 237 to 257 form a helical membrane-spanning segment; it reads INCVAGVSLLFYFGFSFYTVT. An N-linked (GlcNAc...) asparagine glycan is attached at N258. At 258–281 the chain is on the extracellular side; that stretch reads NQSYLAFATLTAGSLSSKTEVADT. The chain crosses the membrane as a helical span at residues 282–302; it reads IGLSCIWVLAETITMIVICSA. The Cytoplasmic portion of the chain corresponds to 303-352; the sequence is CDGLASEVNGTAQILARIYGKSKQFQNLIDKFLTKSIKQDLQFTAYGFFS. The chain crosses the membrane as a helical span at residues 353–373; the sequence is IDNSTLFKIFSAVTTYLVILI. Residues 374-389 are Extracellular-facing; that stretch reads QFKQLEDSKVEDISQA.

The protein belongs to the insect chemoreceptor superfamily. Gustatory receptor (GR) family. Gr21a subfamily. As to expression, expressed in chemosensory neurons of about 20 male-specific gustatory bristles in the forelegs. No expression is seen in the mechanosensory neurons. In larvae, expressed in the ventral pharyngeal sense organ.

It localises to the cell membrane. Dsx-dependent essential component of pheromone-driven courtship behavior. Recognizes a female pheromone involved in the second step (tapping step) of the courtship display which is essential for efficient execution of the entire courtship sequence and timely mating. Required for detection of the male sex pheromone CH503 which is transferred from males to females during mating and inhibits courtship behavior by other males. Gr68a-expressing neurons in the male foreleg relay signals to the suboesophageal zone (SEZ) and courtship suppression is mediated by the release of the neuropeptide tachykinin from a cluster of 8-10 neurons in the SEZ. The polypeptide is Gustatory receptor 68a (Gr68a) (Drosophila melanogaster (Fruit fly)).